The sequence spans 331 residues: Phosphate acyltransferase (331 aa).

This sequence belongs to the PlsX family. In terms of assembly, homodimer. Probably interacts with PlsY.

It is found in the cytoplasm. It carries out the reaction a fatty acyl-[ACP] + phosphate = an acyl phosphate + holo-[ACP]. It participates in lipid metabolism; phospholipid metabolism. Catalyzes the reversible formation of acyl-phosphate (acyl-PO(4)) from acyl-[acyl-carrier-protein] (acyl-ACP). This enzyme utilizes acyl-ACP as fatty acyl donor, but not acyl-CoA. The sequence is that of Phosphate acyltransferase from Mesoplasma florum (strain ATCC 33453 / NBRC 100688 / NCTC 11704 / L1) (Acholeplasma florum).